Here is a 346-residue protein sequence, read N- to C-terminus: KH domain-containing, RNA-binding, signal transduction-associated protein 2 (346 aa).

One can recognise a KH domain in the interval 65–131; that stretch reads LIPVQQYPKF…AKYAHLSNDL (67 aa). Residues 175-291 form a disordered region; the sequence is LSYLNGSDDP…SYESYDDNYS (117 aa). A compositionally biased stretch (low complexity) spans 195-224; it reads LRLTSTASPRGRGSAAPPAPPGRGAAAPRG. Positions 268-287 are enriched in acidic residues; the sequence is YGYDDGYDGEYDDQSYESYD.

It belongs to the KHDRBS family.

The protein localises to the nucleus. Its function is as follows. RNA-binding protein that plays a role in the regulation of alternative splicing. This chain is KH domain-containing, RNA-binding, signal transduction-associated protein 2 (khdrbs2), found in Danio rerio (Zebrafish).